Reading from the N-terminus, the 839-residue chain is Valine--tRNA ligase (839 aa).

Positions 41–51 (PNVTGKLHIGH) match the 'HIGH' region motif. A coiled-coil region spans residues 315–343 (RENIVLKLKKENLIDKIENIKSNIIMSER). The short motif at 517–521 (KMSKS) is the 'KMSKS' region element. ATP is bound at residue Lys-520. Residues 813 to 839 (INNASEIKVKEEKEKLEKYIKEFEEIK) adopt a coiled-coil conformation.

It belongs to the class-I aminoacyl-tRNA synthetase family. ValS type 1 subfamily. As to quaternary structure, monomer.

The protein resides in the cytoplasm. The catalysed reaction is tRNA(Val) + L-valine + ATP = L-valyl-tRNA(Val) + AMP + diphosphate. In terms of biological role, catalyzes the attachment of valine to tRNA(Val). As ValRS can inadvertently accommodate and process structurally similar amino acids such as threonine, to avoid such errors, it has a 'posttransfer' editing activity that hydrolyzes mischarged Thr-tRNA(Val) in a tRNA-dependent manner. The chain is Valine--tRNA ligase from Mycoplasma mobile (strain ATCC 43663 / 163K / NCTC 11711) (Mesomycoplasma mobile).